The sequence spans 136 residues: 6,7-dimethyl-8-ribityllumazine synthase (136 aa).

Residues Phe11, 43–45 (SFD), and 67–69 (AVI) each bind 5-amino-6-(D-ribitylamino)uracil. 72-73 (ET) is a (2S)-2-hydroxy-3-oxobutyl phosphate binding site. His75 (proton donor) is an active-site residue. Leu100 is a binding site for 5-amino-6-(D-ribitylamino)uracil. Residue Arg115 coordinates (2S)-2-hydroxy-3-oxobutyl phosphate.

This sequence belongs to the DMRL synthase family.

The catalysed reaction is (2S)-2-hydroxy-3-oxobutyl phosphate + 5-amino-6-(D-ribitylamino)uracil = 6,7-dimethyl-8-(1-D-ribityl)lumazine + phosphate + 2 H2O + H(+). It participates in cofactor biosynthesis; riboflavin biosynthesis; riboflavin from 2-hydroxy-3-oxobutyl phosphate and 5-amino-6-(D-ribitylamino)uracil: step 1/2. Functionally, catalyzes the formation of 6,7-dimethyl-8-ribityllumazine by condensation of 5-amino-6-(D-ribitylamino)uracil with 3,4-dihydroxy-2-butanone 4-phosphate. This is the penultimate step in the biosynthesis of riboflavin. This chain is 6,7-dimethyl-8-ribityllumazine synthase, found in Picrophilus torridus (strain ATCC 700027 / DSM 9790 / JCM 10055 / NBRC 100828 / KAW 2/3).